The following is a 900-amino-acid chain: Protein translocase subunit SecA (900 aa).

ATP is bound by residues glutamine 87, 105–109, and aspartate 512; that span reads GEGKT. A disordered region spans residues 849-900; sequence ERLAQQQQFSHQEEDSLNTGSPAQADRKIGRNDPCPCGSGKKYKQCHGRLQK. Residues cysteine 883, cysteine 885, cysteine 894, and histidine 895 each contribute to the Zn(2+) site. Over residues 889–900 the composition is skewed to basic residues; the sequence is KKYKQCHGRLQK.

The protein belongs to the SecA family. In terms of assembly, monomer and homodimer. Part of the essential Sec protein translocation apparatus which comprises SecA, SecYEG and auxiliary proteins SecDF-YajC and YidC. The cofactor is Zn(2+).

It localises to the cell inner membrane. The protein resides in the cytoplasm. It carries out the reaction ATP + H2O + cellular proteinSide 1 = ADP + phosphate + cellular proteinSide 2.. In terms of biological role, part of the Sec protein translocase complex. Interacts with the SecYEG preprotein conducting channel. Has a central role in coupling the hydrolysis of ATP to the transfer of proteins into and across the cell membrane, serving both as a receptor for the preprotein-SecB complex and as an ATP-driven molecular motor driving the stepwise translocation of polypeptide chains across the membrane. The protein is Protein translocase subunit SecA of Pectobacterium atrosepticum (strain SCRI 1043 / ATCC BAA-672) (Erwinia carotovora subsp. atroseptica).